Reading from the N-terminus, the 403-residue chain is Nuclear receptor subfamily 2 group F member 5 (403 aa).

The interval 16-44 (PGSQLQMCSQEPGGTPGTPSGSTPGNDAL) is disordered. A DNA-binding region (nuclear receptor) is located at residues 51 to 126 (NVDCMVCGDK…VGMRREAVQR (76 aa)). 2 consecutive NR C4-type zinc fingers follow at residues 54–74 (CMVC…CEGC) and 90–114 (CRGN…LKKC). One can recognise an NR LBD domain in the interval 152–378 (YLSGFISLLL…TLLRDMLLSG (227 aa)).

Belongs to the nuclear hormone receptor family. NR2 subfamily.

It localises to the nucleus. In terms of biological role, putative receptor that is required in photoreceptor cells precursors during eye development. This chain is Nuclear receptor subfamily 2 group F member 5 (nr2f5), found in Danio rerio (Zebrafish).